The chain runs to 189 residues: Movement protein (189 aa).

This sequence belongs to the tombusvirus/aureusvirus movement protein p22 family. In terms of assembly, interacts with host protein HFI22. Phosphorylated.

The protein resides in the host membrane. Functionally, transports viral genome to neighboring plant cells directly through plasmosdesmata, without any budding. The movement protein allows efficient cell to cell propagation, by bypassing the host cell wall barrier. Displays RNA-binding activity. The polypeptide is Movement protein (Capsicum annuum (Capsicum pepper)).